Consider the following 162-residue polypeptide: Auracyanin-A (162 aa).

The signal sequence occupies residues 1 to 22; that stretch reads MKITLRMMVLAVLTAMAMVLAA. Residue C23 is the site of N-palmitoyl cysteine attachment. C23 carries S-diacylglycerol cysteine lipidation. The Plastocyanin-like domain occupies 42–162; the sequence is VTIEIGSKGE…PLMQGKLVVN (121 aa). Cu cation is bound by residues H81, C146, H151, and M155.

Monomer. Cu cation is required as a cofactor.

The protein localises to the cell membrane. Probably a soluble electron acceptor for the integral membrane protein electron transfer alternative complex III (ACIII). This is Auracyanin-A from Chloroflexus aurantiacus (strain ATCC 29366 / DSM 635 / J-10-fl).